A 119-amino-acid polypeptide reads, in one-letter code: Large ribosomal subunit protein bL20 (119 aa).

It belongs to the bacterial ribosomal protein bL20 family.

Binds directly to 23S ribosomal RNA and is necessary for the in vitro assembly process of the 50S ribosomal subunit. It is not involved in the protein synthesizing functions of that subunit. The chain is Large ribosomal subunit protein bL20 from Erythrobacter litoralis (strain HTCC2594).